We begin with the raw amino-acid sequence, 240 residues long: RxLR effector protein PexRD20 (240 aa).

Positions 1-23 are cleaved as a signal peptide; sequence MRCHYFVLLAVAAFLAGANVAVA. The RxLR-dEER signature appears at 43–58; it reads RALRSHTKATDHGEER.

The protein belongs to the RxLR effector family.

Its subcellular location is the secreted. The protein localises to the host cytoplasm. The protein resides in the host nucleus. It is found in the host nucleolus. Functionally, effector that enhances P.infestans colonization of Nicotiana benthamiana leaves. The protein is RxLR effector protein PexRD20 of Phytophthora infestans (strain T30-4) (Potato late blight agent).